Reading from the N-terminus, the 156-residue chain is MTQLKYLLLVSRQGKIRLKKWYTAMSAGEKAKIVKDLTPTILARKPKMCNIIEYNDHKVVYKRYASLYFIVGMTPDVDNELLTLEIIHRFVETMDTYFGNVCELDIIFNFSKVYDILNEMIMCDGSIAESSRKEVLHHVTVMDTMESNDNLERVLS.

It belongs to the adaptor complexes small subunit family. As to quaternary structure, adapter protein complex 1 (AP-1) is a heterotetramer composed of two large adaptins (gamma-type subunit APL4 and beta-type subunit APL2), a medium adaptin (mu-type subunit APM1) and a small adaptin (sigma-type subunit APS1). AP-1 interacts with clathrin. Also a component of the AP-1R complex composed of at least APM2, APL4 and APS1.

Its subcellular location is the cytoplasm. It is found in the nucleus. The protein localises to the cytoplasmic vesicle. It localises to the clathrin-coated vesicle membrane. The protein resides in the endosome. Its subcellular location is the golgi apparatus. Component of the adapter complexes which link clathrin to receptors in coated vesicles. Clathrin-associated protein complexes are believed to interact with the cytoplasmic tails of membrane proteins, leading to their selection and concentration. AP19 is probably a subunit of the Golgi membrane adapter. Component of the AP-1-related (AP-1R) complex, an adapter protein complex that mediates sorting of cargo SNARE SNC1. In contrast to the APM1-containing AP-1 complex, AP-1R is incapable of sorting CHS3. The sequence is that of AP-1 complex subunit sigma-1 (APS1) from Saccharomyces cerevisiae (strain ATCC 204508 / S288c) (Baker's yeast).